The sequence spans 182 residues: Glycerol-3-phosphate acyltransferase 1 (182 aa).

A run of 5 helical transmembrane segments spans residues 5-25, 54-74, 81-101, 117-137, and 157-177; these read MQFL…AYIV, GYFI…VSIA, STFV…PIVF, IAFD…FYLI, and ILYS…VLIL.

Belongs to the PlsY family. In terms of assembly, probably interacts with PlsX.

The protein localises to the cell membrane. The catalysed reaction is an acyl phosphate + sn-glycerol 3-phosphate = a 1-acyl-sn-glycero-3-phosphate + phosphate. Its pathway is lipid metabolism; phospholipid metabolism. Catalyzes the transfer of an acyl group from acyl-phosphate (acyl-PO(4)) to glycerol-3-phosphate (G3P) to form lysophosphatidic acid (LPA). This enzyme utilizes acyl-phosphate as fatty acyl donor, but not acyl-CoA or acyl-ACP. The polypeptide is Glycerol-3-phosphate acyltransferase 1 (Bacillus cereus (strain ATCC 10987 / NRS 248)).